The sequence spans 398 residues: O-methyltransferase mpaG' (398 aa).

Ser-144 is a binding site for (4E,8E)-10-(4,6-dihydroxy-7-methyl-3-oxo-1,3-dihydro-2-benzofuran-5-yl)-4,8-dimethyldeca-4,8-dienoate. Ser-144 is a binding site for 4-farnesyl-3,5-dihydroxy-6-methylphthalide. Ser-144 serves as a coordination point for 6-O-desmethylmycophenolate. Residue Asn-197 coordinates S-adenosyl-L-homocysteine. Tyr-199 contributes to the (4E,8E)-10-(4,6-dihydroxy-7-methyl-3-oxo-1,3-dihydro-2-benzofuran-5-yl)-4,8-dimethyldeca-4,8-dienoate binding site. Tyr-199 contributes to the 4-farnesyl-3,5-dihydroxy-6-methylphthalide binding site. Residue Tyr-199 participates in 6-O-desmethylmycophenolate binding. Residues Tyr-203, Asp-237, Gly-239, His-244, Asp-245, Asp-264, and Arg-265 each coordinate S-adenosyl-L-homocysteine. S-adenosyl-L-methionine is bound at residue Asp-264. (4E,8E)-10-(4,6-dihydroxy-7-methyl-3-oxo-1,3-dihydro-2-benzofuran-5-yl)-4,8-dimethyldeca-4,8-dienoate-binding residues include Arg-265 and Gln-267. Arg-265 serves as a coordination point for 6-O-desmethylmycophenolate. S-adenosyl-L-homocysteine is bound by residues Asp-286, Ile-287, and His-302. Ser-303 serves as a coordination point for (4E,8E)-10-(4,6-dihydroxy-7-methyl-3-oxo-1,3-dihydro-2-benzofuran-5-yl)-4,8-dimethyldeca-4,8-dienoate. Ser-303 lines the 4-farnesyl-3,5-dihydroxy-6-methylphthalide pocket. Ser-303 contributes to the 6-O-desmethylmycophenolate binding site. His-306 functions as the Proton acceptor in the catalytic mechanism. Active-site residues include Glu-335 and Glu-362.

Belongs to the class I-like SAM-binding methyltransferase superfamily. Cation-independent O-methyltransferase family. As to quaternary structure, homodimer.

The protein resides in the cytoplasm. Its subcellular location is the cytosol. The catalysed reaction is (4E,8E)-10-(4,6-dihydroxy-7-methyl-3-oxo-1,3-dihydro-2-benzofuran-5-yl)-4,8-dimethyldeca-4,8-dienoate + S-adenosyl-L-methionine = (4E,8E)-10-(4-hydroxy-6-methoxy-7-methyl-3-oxo-1,3-dihydro-2-benzofuran-5-yl)-4,8-dimethyldeca-4,8-dienoate + S-adenosyl-L-homocysteine + H(+). It carries out the reaction 4-farnesyl-3,5-dihydroxy-6-methylphthalide + S-adenosyl-L-methionine = 4-farnesyl-3,5-dihydroxy-6-methoxylphthalide + S-adenosyl-L-homocysteine + H(+). The enzyme catalyses 6-O-desmethylmycophenolate + S-adenosyl-L-methionine = mycophenolate + S-adenosyl-L-homocysteine + H(+). Its pathway is secondary metabolite biosynthesis; terpenoid biosynthesis. O-methyltransferase; part of the gene cluster that mediates the biosynthesis of mycophenolic acid (MPA), the first isolated antibiotic natural product in the world obtained from a culture of Penicillium brevicompactum in 1893. MpaG' catalyzes the 5-O-methylation of three precursors in MPA biosynthesis including demethylmycophenolic acid (DMMPA), 4-farnesyl-3,5-dihydroxy-6-methylphthalide (FDHMP), and an intermediate containing three fewer carbon atoms compared to FDHMP (FDHMP-3C) with different catalytic efficiencies. The first step of the pathway is the synthesis of 5-methylorsellinic acid (5MOA) by the cytosolic polyketide synthase mpaC. 5MOA is then converted to the phthalide compound 5,7-dihydroxy-4,6-dimethylphthalide (DHMP) by the endoplasmic reticulum-bound cytochrome P450 monooxygenase mpaDE. MpaDE first catalyzes hydroxylation of 5-MOA to 4,6-dihydroxy-2-(hydroxymethyl)-3-methylbenzoic acid (DHMB). MpaDE then acts as a lactone synthase that catalyzes the ring closure to convert DHMB into DHMP. The next step is the prenylation of DHMP by the Golgi apparatus-associated prenyltransferase mpaA to yield farnesyl-DHMP (FDHMP). The ER-bound oxygenase mpaB then mediates the oxidative cleavage the C19-C20 double bond in FDHMP to yield FDHMP-3C via a mycophenolic aldehyde intermediate. The O-methyltransferase mpaG catalyzes the methylation of FDHMP-3C to yield MFDHMP-3C. MpaG and mpaB can also switch the order in which they act and, in this case, the conversion of FDHMP to MFDHMP-3C can take place via 5-O-methyl-FDHMP (MFDHMP). After the cytosolic methylation of FDHMP-3C, MFDHMP-3C enters into peroxisomes probably via free diffusion due to its low molecular weight. Upon a peroxisomal CoA ligation reaction, catalyzed by a beta-oxidation component enzyme acyl-CoA ligase ACL891, MFDHMP-3C-CoA would then be restricted to peroxisomes for the following beta-oxidation pathway steps. The peroxisomal beta-oxidation machinery than converts MFDHMP-3C-CoA into MPA_CoA, via a beta-oxidation chain-shortening process. Finally mpaH acts as a peroxisomal acyl-CoA hydrolase with high substrate specificity toward MPA-CoA to release the final product MPA. MpaH can also hydrolyze DMMPA-CoA to release demethylmycophenolic acid (DMMPA) that is further converted to MPA by mpaG. This Penicillium brevicompactum protein is O-methyltransferase mpaG'.